The sequence spans 299 residues: Diaminopimelate epimerase (299 aa).

Substrate contacts are provided by N11 and N63. C72 serves as the catalytic Proton donor. Substrate contacts are provided by residues 73 to 74 (GN), N211, and 229 to 230 (ER). C238 functions as the Proton acceptor in the catalytic mechanism. 239–240 (GT) contacts substrate.

Belongs to the diaminopimelate epimerase family. As to quaternary structure, homodimer.

It localises to the cytoplasm. It carries out the reaction (2S,6S)-2,6-diaminopimelate = meso-2,6-diaminopimelate. It functions in the pathway amino-acid biosynthesis; L-lysine biosynthesis via DAP pathway; DL-2,6-diaminopimelate from LL-2,6-diaminopimelate: step 1/1. Functionally, catalyzes the stereoinversion of LL-2,6-diaminopimelate (L,L-DAP) to meso-diaminopimelate (meso-DAP), a precursor of L-lysine and an essential component of the bacterial peptidoglycan. This Natranaerobius thermophilus (strain ATCC BAA-1301 / DSM 18059 / JW/NM-WN-LF) protein is Diaminopimelate epimerase.